The chain runs to 252 residues: Trans-aconitate 2-methyltransferase (252 aa).

The protein belongs to the methyltransferase superfamily. Tam family.

Its subcellular location is the cytoplasm. It carries out the reaction trans-aconitate + S-adenosyl-L-methionine = (E)-3-(methoxycarbonyl)pent-2-enedioate + S-adenosyl-L-homocysteine. Functionally, catalyzes the S-adenosylmethionine monomethyl esterification of trans-aconitate. The chain is Trans-aconitate 2-methyltransferase from Escherichia coli (strain 55989 / EAEC).